A 70-amino-acid polypeptide reads, in one-letter code: Large ribosomal subunit protein bL31 (70 aa).

Positions 16, 18, 38, and 41 each coordinate Zn(2+).

Belongs to the bacterial ribosomal protein bL31 family. Type A subfamily. Part of the 50S ribosomal subunit. The cofactor is Zn(2+).

Its function is as follows. Binds the 23S rRNA. This is Large ribosomal subunit protein bL31 from Bifidobacterium longum (strain DJO10A).